The primary structure comprises 806 residues: Protein translocase subunit SecA (806 aa).

Residues Gln87, 105 to 109 (GEGKT), and Asp493 contribute to the ATP site.

The protein belongs to the SecA family. As to quaternary structure, monomer and homodimer. Part of the essential Sec protein translocation apparatus which comprises SecA, SecYEG and auxiliary proteins SecDF. Other proteins may also be involved.

Its subcellular location is the cell membrane. It localises to the cytoplasm. It catalyses the reaction ATP + H2O + cellular proteinSide 1 = ADP + phosphate + cellular proteinSide 2.. Part of the Sec protein translocase complex. Interacts with the SecYEG preprotein conducting channel. Has a central role in coupling the hydrolysis of ATP to the transfer of proteins into and across the cell membrane, serving as an ATP-driven molecular motor driving the stepwise translocation of polypeptide chains across the membrane. In Mycoplasma genitalium (strain ATCC 33530 / DSM 19775 / NCTC 10195 / G37) (Mycoplasmoides genitalium), this protein is Protein translocase subunit SecA.